The sequence spans 338 residues: Activator of 90 kDa heat shock protein ATPase homolog 1 (338 aa).

At Lys-3 the chain carries N6-acetyllysine. Lys-182 is covalently cross-linked (Glycyl lysine isopeptide (Lys-Gly) (interchain with G-Cter in SUMO1)). Ser-193 carries the phosphoserine modification. A Glycyl lysine isopeptide (Lys-Gly) (interchain with G-Cter in SUMO2) cross-link involves residue Lys-203. Lys-212 is modified (N6-acetyllysine). Tyr-223 bears the Phosphotyrosine; by ABL mark. Residue Ser-258 is modified to Phosphoserine.

Belongs to the AHA1 family. As to quaternary structure, interacts with HSPCA/HSP90. Interacts (phosphorylated on Tyr-223) with HSP90AA1; the interaction activates HSP90AA1 ATPase activity. Interacts with HSP90AB1. Interacts with GCH1. Interacts with SRPK1. Interacts with FLCN. (Microbial infection) Interacts with vesicular stomatitis virus glycoprotein (VSV G) (via cytoplasmic tail). Post-translationally, phosphorylation at Tyr-223 enhances binding to chaperone HSP90AA1. Expressed in numerous tissues, including brain, heart, skeletal muscle and kidney and, at lower levels, liver and placenta.

The protein localises to the cytoplasm. It is found in the cytosol. The protein resides in the endoplasmic reticulum. Functionally, acts as a co-chaperone of HSP90AA1. Activates the ATPase activity of HSP90AA1 leading to increase in its chaperone activity. Competes with the inhibitory co-chaperone FNIP1 for binding to HSP90AA1, thereby providing a reciprocal regulatory mechanism for chaperoning of client proteins. Competes with the inhibitory co-chaperone TSC1 for binding to HSP90AA1, thereby providing a reciprocal regulatory mechanism for chaperoning of client proteins. This Homo sapiens (Human) protein is Activator of 90 kDa heat shock protein ATPase homolog 1 (AHSA1).